We begin with the raw amino-acid sequence, 118 residues long: Deoxynogalonate monooxygenase (118 aa).

The 87-residue stretch at 14–100 (VTFVNRFTVH…ALSTSEHGLF (87 aa)) folds into the ABM domain.

In terms of assembly, homodimer.

It carries out the reaction deoxynogalonate + O2 = nogalonate + H2O + H(+). The protein operates within antibiotic biosynthesis. Functionally, involved in the biosynthesis of the anthracycline (aromatic polyketide) antibiotic nogalamycin. Catalyzes the oxygenation of 12-deoxy-nogalonic acid at position 12 to yield nogalonic acid. The chain is Deoxynogalonate monooxygenase from Streptomyces nogalater.